Reading from the N-terminus, the 399-residue chain is Phosphoglycerate kinase (399 aa).

Residues 22 to 24 (DFN), Arg38, 61 to 64 (HLGR), Arg120, and Arg153 contribute to the substrate site. Residues Lys206, Gly297, Glu328, and 354-357 (GGDT) contribute to the ATP site.

It belongs to the phosphoglycerate kinase family. As to quaternary structure, monomer.

It localises to the cytoplasm. It carries out the reaction (2R)-3-phosphoglycerate + ATP = (2R)-3-phospho-glyceroyl phosphate + ADP. The protein operates within carbohydrate degradation; glycolysis; pyruvate from D-glyceraldehyde 3-phosphate: step 2/5. The protein is Phosphoglycerate kinase of Campylobacter concisus (strain 13826).